The sequence spans 775 residues: MASLIYRQLLTNSYTVELSDEINTIGSEKSQNITINPGPFAQTNYAPVTWSHGEVNDSTTIEPVLDGPYQPTSFKPPSDYWILLNPTNQQVVLEGTNKTDIWIALLLVEPNVTNQSRQYTLFGETKQITIENNTNKWKFFEMFRSNVSSEFQHKRTLTSDTKLAGFLKHYNSVWTFHGETPHATTDYSSTSNLSEVETTIHVEFYIISRSQESKCVEYINTGLPPMQNTRNIVPVALSSRSVTYQRAQVSEDIIISKTSLWKEMQYNRDIIIRFKFNNSIIKLGGLGYKWSEISFKAANYQYNYLRDGEQVTAHTTCSVNGVNNFSYNGGLLPTHFSISRYEVIKENSYVYVDYWDDSQAFRNMVYVRSLAANLNSVKCSGGNYNFQMPVGAWPVMSGGAVSLHFAGVTLSTQFTDFVSLNSLRFRFSLTVEEPPFSILRTRVSGLYGLPASNPNSGHEYYEIAGRFSLISLVPSNDDYQTPIMNSITVRQDLERQLGDLREEFNSLSQEIAITQLIDLALLPLDMFSMFSGIKSTIDAAKSMATKVMKKFKRSGLATSISELTGSLSNAASSVSRSSSIRSNISSISEWTDVSEQIAGSSDSVRNISTQTSAISRRLRLREITTQTEGMNDIDISAAVLKTKIDRSTHIRPDTLPDIITESSEKFIPKRAYRVLKDDEVMEADVDGKFFAYKVDTFEEVPFDVDKFVDLVTDSPVISAIIDFKTLKNLNDNYGITRSQALDLIRSDPRVLRDFINQNNPIIKNRIEQLILQCRL.

Residues 65-223 (LDGPYQPTSF…KCVEYINTGL (159 aa)) form a spike head region. The interval 247–478 (AQVSEDIIIS…LISLVPSNDD (232 aa)) is spike body and stalk (antigen domain). Positions 307–309 (DGE) match the DGE motif; interaction with ITGA2/ITGB1 heterodimer motif. Cysteines 317 and 379 form a disulfide. Positions 388–408 (MPVGAWPVMSGGAVSLHFAGV) are hydrophobic; possible role in virus entry into host cell. The YGL motif; interaction with ITGA4 motif lies at 447–449 (YGL). A coiled-coil region spans residues 483 to 510 (IMNSITVRQDLERQLGDLREEFNSLSQE). The spike foot stretch occupies residues 509–775 (QEIAITQLID…IEQLILQCRL (267 aa)). The short motif at 643 to 645 (KID) is the KID motif; interaction with HSPA8 element.

The protein belongs to the rotavirus VP4 family. In terms of assembly, homotrimer. VP4 adopts a dimeric appearance above the capsid surface, while forming a trimeric base anchored inside the capsid layer. Only hints of the third molecule are observed above the capsid surface. It probably performs a series of molecular rearrangements during viral entry. Prior to trypsin cleavage, it is flexible. The priming trypsin cleavage triggers its rearrangement into rigid spikes with approximate two-fold symmetry of their protruding parts. After an unknown second triggering event, cleaved VP4 may undergo another rearrangement, in which two VP5* subunits fold back on themselves and join a third subunit to form a tightly associated trimer, shaped like a folded umbrella. Interacts with VP6. Interacts with VP7. Homotrimer. The trimer is coiled-coil stabilized by its C-terminus, however, its N-terminus, known as antigen domain or 'body', seems to be flexible allowing it to self-associate either as a dimer or a trimer. Proteolytic cleavage by trypsin results in activation of VP4 functions and greatly increases infectivity. The penetration into the host cell is dependent on trypsin treatment of VP4. It produces two peptides, VP5* and VP8* that remain associated with the virion. Cleavage of VP4 by trypsin probably occurs in vivo in the lumen of the intestine prior to infection of enterocytes. Trypsin seems to be incorporated into the three-layered viral particles but remains inactive as long as the viral outer capsid is intact and would only be activated upon the solubilization of the latter.

Its subcellular location is the virion. It localises to the host rough endoplasmic reticulum. The protein localises to the host cell membrane. It is found in the host cytoplasm. The protein resides in the host cytoskeleton. Its subcellular location is the host endoplasmic reticulum-Golgi intermediate compartment. In terms of biological role, spike-forming protein that mediates virion attachment to the host epithelial cell receptors and plays a major role in cell penetration, determination of host range restriction and virulence. Rotavirus attachment and entry into the host cell probably involves multiple sequential contacts between the outer capsid proteins VP4 and VP7, and the cell receptors. It is subsequently lost, together with VP7, following virus entry into the host cell. Following entry into the host cell, low intracellular or intravesicular Ca(2+) concentration probably causes the calcium-stabilized VP7 trimers to dissociate from the virion. This step is probably necessary for the membrane-disrupting entry step and the release of VP4, which is locked onto the virion by VP7. During the virus exit from the host cell, VP4 seems to be required to target the newly formed virions to the host cell lipid rafts. Functionally, forms the spike 'foot' and 'body' and acts as a membrane permeabilization protein that mediates release of viral particles from endosomal compartments into the cytoplasm. During entry, the part of VP5* that protrudes from the virus folds back on itself and reorganizes from a local dimer to a trimer. This reorganization may be linked to membrane penetration by exposing VP5* hydrophobic region. In integrin-dependent strains, VP5* targets the integrin heterodimer ITGA2/ITGB1 for cell attachment. Its function is as follows. Forms the head of the spikes and mediates the recognition of specific host cell surface glycans. It is the viral hemagglutinin and an important target of neutralizing antibodies. In sialic acid-dependent strains, VP8* binds to host cell sialic acid, most probably a ganglioside, providing the initial contact. In some other strains, VP8* mediates the attachment to histo-blood group antigens (HBGAs) for viral entry. The protein is Outer capsid protein VP4 of Homo sapiens (Human).